Here is a 360-residue protein sequence, read N- to C-terminus: 3-isopropylmalate dehydrogenase (360 aa).

76–89 provides a ligand contact to NAD(+); sequence GPKWDKLDMAIRPE. Substrate contacts are provided by Arg-96, Arg-106, Arg-134, and Asp-224. Positions 224, 248, and 252 each coordinate Mg(2+). Position 282–294 (282–294) interacts with NAD(+); that stretch reads GSAPDIAGQNMAN.

This sequence belongs to the isocitrate and isopropylmalate dehydrogenases family. LeuB type 1 subfamily. In terms of assembly, homodimer. Mg(2+) is required as a cofactor. It depends on Mn(2+) as a cofactor.

It is found in the cytoplasm. The catalysed reaction is (2R,3S)-3-isopropylmalate + NAD(+) = 4-methyl-2-oxopentanoate + CO2 + NADH. It participates in amino-acid biosynthesis; L-leucine biosynthesis; L-leucine from 3-methyl-2-oxobutanoate: step 3/4. Functionally, catalyzes the oxidation of 3-carboxy-2-hydroxy-4-methylpentanoate (3-isopropylmalate) to 3-carboxy-4-methyl-2-oxopentanoate. The product decarboxylates to 4-methyl-2 oxopentanoate. In Hahella chejuensis (strain KCTC 2396), this protein is 3-isopropylmalate dehydrogenase.